Reading from the N-terminus, the 84-residue chain is U-scoloptoxin(10)-Er1a (84 aa).

An N-terminal signal peptide occupies residues 1–24; the sequence is MSRFCLLFVAFGFVLYFLHMEVTG.

It belongs to the scoloptoxin-10 family. Post-translationally, contains 3 disulfide bonds. Expressed by the venom gland.

Its subcellular location is the secreted. This Ethmostigmus rubripes (Giant centipede) protein is U-scoloptoxin(10)-Er1a.